A 585-amino-acid polypeptide reads, in one-letter code: 1-deoxy-D-xylulose-5-phosphate synthase (585 aa).

Residues H80 and 121–123 contribute to the thiamine diphosphate site; that span reads GHS. A Mg(2+)-binding site is contributed by D152. Thiamine diphosphate is bound by residues 153 to 154, N181, Y259, and E334; that span reads GS. N181 contributes to the Mg(2+) binding site.

The protein belongs to the transketolase family. DXPS subfamily. Homodimer. Mg(2+) is required as a cofactor. Thiamine diphosphate serves as cofactor.

The catalysed reaction is D-glyceraldehyde 3-phosphate + pyruvate + H(+) = 1-deoxy-D-xylulose 5-phosphate + CO2. It participates in metabolic intermediate biosynthesis; 1-deoxy-D-xylulose 5-phosphate biosynthesis; 1-deoxy-D-xylulose 5-phosphate from D-glyceraldehyde 3-phosphate and pyruvate: step 1/1. In terms of biological role, catalyzes the acyloin condensation reaction between C atoms 2 and 3 of pyruvate and glyceraldehyde 3-phosphate to yield 1-deoxy-D-xylulose-5-phosphate (DXP). The chain is 1-deoxy-D-xylulose-5-phosphate synthase from Buchnera aphidicola subsp. Schizaphis graminum (strain Sg).